The sequence spans 103 residues: Phosphoribosyl-ATP pyrophosphatase (103 aa).

Belongs to the PRA-PH family.

It is found in the cytoplasm. The catalysed reaction is 1-(5-phospho-beta-D-ribosyl)-ATP + H2O = 1-(5-phospho-beta-D-ribosyl)-5'-AMP + diphosphate + H(+). The protein operates within amino-acid biosynthesis; L-histidine biosynthesis; L-histidine from 5-phospho-alpha-D-ribose 1-diphosphate: step 2/9. This is Phosphoribosyl-ATP pyrophosphatase from Cereibacter sphaeroides (strain ATCC 17025 / ATH 2.4.3) (Rhodobacter sphaeroides).